The chain runs to 290 residues: Inositol monophosphatase 2 (290 aa).

Residues Glu-83, Asp-103, Ile-105, and Asp-106 each contribute to the Mg(2+) site. Residue Glu-83 participates in substrate binding. Residues 105–108, 207–209, Gln-226, and Asp-233 each bind substrate; these read IDGT and GSS. Asp-233 is a Mg(2+) binding site.

This sequence belongs to the inositol monophosphatase superfamily. Homodimer. Requires Mg(2+) as cofactor. As to expression, mostly expressed in brain, small intestine, heart, kidney, and spleen (at protein level).

It localises to the cytoplasm. The catalysed reaction is a myo-inositol phosphate + H2O = myo-inositol + phosphate. It catalyses the reaction 1D-myo-inositol 1-phosphate + H2O = myo-inositol + phosphate. It carries out the reaction 1D-myo-inositol 2-phosphate + H2O = myo-inositol + phosphate. The enzyme catalyses 1D-myo-inositol 3-phosphate + H2O = myo-inositol + phosphate. The catalysed reaction is 1D-myo-inositol 4-phosphate + H2O = myo-inositol + phosphate. It catalyses the reaction 1D-myo-inositol 5-phosphate + H2O = myo-inositol + phosphate. It carries out the reaction 1D-myo-inositol 6-phosphate + H2O = myo-inositol + phosphate. The enzyme catalyses alpha-D-glucose 1-phosphate + H2O = D-glucose + phosphate. The catalysed reaction is glycerol 2-phosphate + H2O = glycerol + phosphate. It catalyses the reaction adenosine 2'-phosphate + H2O = adenosine + phosphate. It participates in polyol metabolism; myo-inositol biosynthesis; myo-inositol from D-glucose 6-phosphate: step 2/2. In terms of biological role, phosphatase that can use myo-inositol monophosphates, myo-inositol 1,4-diphosphate, scyllo-inositol-1,4-diphosphate, glucose-1-phosphate, beta-glycerophosphate and 2'-AMP as substrates in vitro. No physiological substrates has been described yet. Has been implicated as the pharmacological target for lithium Li(+) action in brain. The polypeptide is Inositol monophosphatase 2 (Mus musculus (Mouse)).